Consider the following 380-residue polypeptide: Large ribosomal subunit protein mL38 (380 aa).

The transit peptide at 1 to 26 (MAAPWWRAAFSVTGRCRGISTSASLS) directs the protein to the mitochondrion. Positions 98-123 (SRTQKLQERKRFLQELRANSEEERAA) form a coiled coil.

It belongs to the phosphatidylethanolamine-binding protein family. Mitochondrion-specific ribosomal protein mL38 subfamily. Component of the mitochondrial ribosome large subunit (39S) which comprises a 16S rRNA and about 50 distinct proteins.

Its subcellular location is the mitochondrion. The sequence is that of Large ribosomal subunit protein mL38 (Mrpl38) from Rattus norvegicus (Rat).